We begin with the raw amino-acid sequence, 473 residues long: MSMKPVVALIGRPNVGKSTIFNQMTKTRQALVADLSGLTRDRQYGDATYNNKSFVVIDTGGIGEADDGRGSIDDYMSAQSHTAIHEADILVFVVDARAGMIGADAEIGKMLHTLGKPVYLVANKIDGVHDAAPAEFYALGLGEPYPMTASHGRGIANLLDDLTADMPEDVEEEDQGGLKLAIIGRPNVGKSTLVNRMLGEERVVVYDMPGTTRDSIYIPFERNGKNYVLIDTAGVRRRGRIDEKVEKFSVIKALQAIKDANVVVAVIDAQEGIVDQDLHMLGYALDAGRAMVVAINKWDGLSEDKKEMIRIELDRRFNFIPYVKVHFISALHGTNVGNLYPSIHKAYASSMFKVSTNRLTQILEDAVAANPPPMSGGRRIKLRYAHLGGHNPPIIVIHGNQTGSLPKSYQRYLENEFRKVFNLEGTPLKVEFKLNTNPYAGKKTTSSKKLRPGVSEARQKRRNMKYKKGSHKK.

2 EngA-type G domains span residues 5-170 (PVVA…PEDV) and 178-351 (LKLA…ASSM). GTP contacts are provided by residues 11–18 (GRPNVGKS), 58–62 (DTGGI), 123–126 (NKID), 184–191 (GRPNVGKS), 231–235 (DTAGV), and 296–299 (NKWD). A KH-like domain is found at 352-436 (FKVSTNRLTQ…PLKVEFKLNT (85 aa)). A disordered region spans residues 438–473 (PYAGKKTTSSKKLRPGVSEARQKRRNMKYKKGSHKK). A compositionally biased stretch (basic residues) spans 459–473 (QKRRNMKYKKGSHKK).

It belongs to the TRAFAC class TrmE-Era-EngA-EngB-Septin-like GTPase superfamily. EngA (Der) GTPase family. In terms of assembly, associates with the 50S ribosomal subunit.

GTPase that plays an essential role in the late steps of ribosome biogenesis. The sequence is that of GTPase Der from Psychrobacter sp. (strain PRwf-1).